Reading from the N-terminus, the 231-residue chain is Putative N-acetylmannosamine-6-phosphate 2-epimerase (231 aa).

The protein belongs to the NanE family.

It carries out the reaction an N-acyl-D-glucosamine 6-phosphate = an N-acyl-D-mannosamine 6-phosphate. The protein operates within amino-sugar metabolism; N-acetylneuraminate degradation; D-fructose 6-phosphate from N-acetylneuraminate: step 3/5. Converts N-acetylmannosamine-6-phosphate (ManNAc-6-P) to N-acetylglucosamine-6-phosphate (GlcNAc-6-P). This is Putative N-acetylmannosamine-6-phosphate 2-epimerase from Glaesserella parasuis serovar 5 (strain SH0165) (Haemophilus parasuis).